The sequence spans 263 residues: S-adenosylmethionine decarboxylase proenzyme (263 aa).

The active-site Schiff-base intermediate with substrate; via pyruvic acid is the serine 113. The residue at position 113 (serine 113) is a Pyruvic acid (Ser); by autocatalysis. Histidine 118 serves as the catalytic Proton acceptor; for processing activity. The Proton donor; for catalytic activity role is filled by cysteine 141.

Belongs to the prokaryotic AdoMetDC family. Type 2 subfamily. In terms of assembly, heterooctamer of four alpha and four beta chains arranged as a tetramer of alpha/beta heterodimers. The cofactor is pyruvate. Post-translationally, is synthesized initially as an inactive proenzyme. Formation of the active enzyme involves a self-maturation process in which the active site pyruvoyl group is generated from an internal serine residue via an autocatalytic post-translational modification. Two non-identical subunits are generated from the proenzyme in this reaction, and the pyruvate is formed at the N-terminus of the alpha chain, which is derived from the carboxyl end of the proenzyme. The post-translation cleavage follows an unusual pathway, termed non-hydrolytic serinolysis, in which the side chain hydroxyl group of the serine supplies its oxygen atom to form the C-terminus of the beta chain, while the remainder of the serine residue undergoes an oxidative deamination to produce ammonia and the pyruvoyl group blocking the N-terminus of the alpha chain.

It carries out the reaction S-adenosyl-L-methionine + H(+) = S-adenosyl 3-(methylsulfanyl)propylamine + CO2. It participates in amine and polyamine biosynthesis; S-adenosylmethioninamine biosynthesis; S-adenosylmethioninamine from S-adenosyl-L-methionine: step 1/1. In terms of biological role, catalyzes the decarboxylation of S-adenosylmethionine to S-adenosylmethioninamine (dcAdoMet), the propylamine donor required for the synthesis of the polyamines spermine and spermidine from the diamine putrescine. In Marinobacter nauticus (strain ATCC 700491 / DSM 11845 / VT8) (Marinobacter aquaeolei), this protein is S-adenosylmethionine decarboxylase proenzyme.